Here is a 653-residue protein sequence, read N- to C-terminus: MVLDEYMWMVIVGFIIAFVLAFSVGANDVANSFGTAVGSGVVTLRQACILASIFETIGSVLLGAKVGETIRKGIIDVNLYNNTVDLLMAGEVSAMVGSAVWQLIASFLKLPVSGTHCIVGATIGFSLVAVGAHSVQWMQLVKIVASWFISPLLSGLMSGALFLMIKFFILNKEDPVPNGLKALPVFYAATIGINVFSILFTGAPLLGLQTFPVWATALLSVGIAIVFALVVWFFVCPWMKKKIASRLKKEGALSRISEESLDKIQDEDTSVFKELPGAKGNDESVLPLTSSSPDAAVSSESVSNGNTRVPYGRAASMTNGSIRSPFSNGTFNFDGHTVKSDAHVYHTVHKDSGLYKDLLHNIHLDRVKIDRSAPENNYRILRRNNSYTCYTAAICGVPVHSTFKSSDIAMPEDSEKLVGDTVSFSKKRLRYDSYSSYCNAVAEAEIEAEEGGVEMKLAAELADPNPPQDDSLEEDKEEKDKSQVHLLFHFLQILTACFGSFAHGGNDVSNAIGPLVALWLIYQQGGVMQEASTPVWLLLYGGVGICAGLWVWGRRVIQTMGKDLTPITPSSGFTIELASAFTVVVASNIGLPISTTHCKVGSVVAVGWIRSRKAVDWRLFRNIFLAWFVTVPVAGLFSAGVMAILQYGILPYV.

At 1 to 5 (MVLDE) the chain is on the extracellular side. The helical transmembrane segment at 6-26 (YMWMVIVGFIIAFVLAFSVGA) threads the bilayer. Residues 27–46 (NDVANSFGTAVGSGVVTLRQ) lie on the Cytoplasmic side of the membrane. Residues 47–67 (ACILASIFETIGSVLLGAKVG) form a helical membrane-spanning segment. Topologically, residues 68–86 (ETIRKGIIDVNLYNNTVDL) are extracellular. Asn81 carries N-linked (GlcNAc...) asparagine glycosylation. The helical transmembrane segment at 87–107 (LMAGEVSAMVGSAVWQLIASF) threads the bilayer. Residues 108-109 (LK) are Cytoplasmic-facing. The chain crosses the membrane as a helical span at residues 110-130 (LPVSGTHCIVGATIGFSLVAV). At 131–142 (GAHSVQWMQLVK) the chain is on the extracellular side. A helical membrane pass occupies residues 143–163 (IVASWFISPLLSGLMSGALFL). Over 164-187 (MIKFFILNKEDPVPNGLKALPVFY) the chain is Cytoplasmic. A helical membrane pass occupies residues 188 to 208 (AATIGINVFSILFTGAPLLGL). The Extracellular segment spans residues 209-217 (QTFPVWATA). A helical membrane pass occupies residues 218–238 (LLSVGIAIVFALVVWFFVCPW). At 239–483 (MKKKIASRLK…EDKEEKDKSQ (245 aa)) the chain is on the cytoplasmic side. The segment at 275–310 (LPGAKGNDESVLPLTSSSPDAAVSSESVSNGNTRVP) is disordered. Residues 290 to 303 (SSSPDAAVSSESVS) show a composition bias toward low complexity. A helical transmembrane segment spans residues 484–504 (VHLLFHFLQILTACFGSFAHG). Residues 505 to 532 (GNDVSNAIGPLVALWLIYQQGGVMQEAS) are Extracellular-facing. Residues 533 to 553 (TPVWLLLYGGVGICAGLWVWG) form a helical membrane-spanning segment. At 554–572 (RRVIQTMGKDLTPITPSSG) the chain is on the cytoplasmic side. A helical membrane pass occupies residues 573 to 587 (FTIELASAFTVVVAS). At 588–594 (NIGLPIS) the chain is on the extracellular side. The helical transmembrane segment at 595–610 (TTHCKVGSVVAVGWIR) threads the bilayer. Residues 611 to 622 (SRKAVDWRLFRN) are Cytoplasmic-facing. The chain crosses the membrane as a helical span at residues 623 to 643 (IFLAWFVTVPVAGLFSAGVMA). At 644 to 653 (ILQYGILPYV) the chain is on the extracellular side.

This sequence belongs to the inorganic phosphate transporter (PiT) (TC 2.A.20) family. As to quaternary structure, homodimer.

It is found in the cell membrane. The protein localises to the apical cell membrane. It carries out the reaction 2 Na(+)(out) + phosphate(out) = 2 Na(+)(in) + phosphate(in). Sodium-phosphate symporter which preferentially transports the monovalent form of phosphate with a stoichiometry of two sodium ions per phosphate ion. This is Sodium-dependent phosphate transporter 2 (slc20a2) from Xenopus laevis (African clawed frog).